We begin with the raw amino-acid sequence, 458 residues long: ATP synthase subunit beta (458 aa).

Residue 148 to 155 (GGAGVGKT) coordinates ATP.

The protein belongs to the ATPase alpha/beta chains family. F-type ATPases have 2 components, CF(1) - the catalytic core - and CF(0) - the membrane proton channel. CF(1) has five subunits: alpha(3), beta(3), gamma(1), delta(1), epsilon(1). CF(0) has three main subunits: a(1), b(2) and c(9-12). The alpha and beta chains form an alternating ring which encloses part of the gamma chain. CF(1) is attached to CF(0) by a central stalk formed by the gamma and epsilon chains, while a peripheral stalk is formed by the delta and b chains.

Its subcellular location is the cell inner membrane. The catalysed reaction is ATP + H2O + 4 H(+)(in) = ADP + phosphate + 5 H(+)(out). In terms of biological role, produces ATP from ADP in the presence of a proton gradient across the membrane. The catalytic sites are hosted primarily by the beta subunits. The chain is ATP synthase subunit beta from Francisella tularensis subsp. tularensis (strain FSC 198).